Consider the following 317-residue polypeptide: Glucose-6-phosphate isomerase, cytosolic 2B (317 aa).

Glutamate 108 (proton donor) is an active-site residue. Residues histidine 139 and lysine 264 contribute to the active site.

The protein belongs to the GPI family. In terms of assembly, homodimer.

Its subcellular location is the cytoplasm. The enzyme catalyses alpha-D-glucose 6-phosphate = beta-D-fructose 6-phosphate. The protein operates within carbohydrate degradation; glycolysis; D-glyceraldehyde 3-phosphate and glycerone phosphate from D-glucose: step 2/4. In Clarkia lewisii (Farewell-to-spring), this protein is Glucose-6-phosphate isomerase, cytosolic 2B (PGIC2-B).